Here is a 306-residue protein sequence, read N- to C-terminus: Leucine-rich repeat-containing protein 75B (306 aa).

The disordered stretch occupies residues 1-22 (MGARLGRRARADAPAAPSAGPA). Residues 12–22 (DAPAAPSAGPA) are compositionally biased toward low complexity. 2 LRR repeats span residues 173-186 (LVVL…LSDE) and 198-211 (LPRL…GNRL).

Belongs to the LRRC75 family.

May suppress myogenic differentiation by modulating MYOG expression and Erk1/2 signaling. The chain is Leucine-rich repeat-containing protein 75B from Mus musculus (Mouse).